The following is a 405-amino-acid chain: 26S proteasome regulatory subunit 8 homolog (405 aa).

Thr2 is subject to N-acetylthreonine. 189–196 (GPPGTGKT) lines the ATP pocket.

The protein belongs to the AAA ATPase family. As to quaternary structure, may form a homodimer or a heterodimer with a related family member. Interacts with OLA1, TMA17, and UBR1. Post-translationally, N-acetylated by NAT1.

It localises to the cytoplasm. The protein resides in the nucleus. Its function is as follows. The 26S proteasome is involved in the ATP-dependent degradation of ubiquitinated proteins. The regulatory (or ATPase) complex confers ATP dependency and substrate specificity to the 26S complex. This chain is 26S proteasome regulatory subunit 8 homolog (RPT6), found in Saccharomyces cerevisiae (strain ATCC 204508 / S288c) (Baker's yeast).